Here is a 246-residue protein sequence, read N- to C-terminus: UPF0736 protein GK0808 (246 aa).

This sequence belongs to the UPF0736 family.

The sequence is that of UPF0736 protein GK0808 from Geobacillus kaustophilus (strain HTA426).